The following is a 362-amino-acid chain: 3-dehydroquinate synthase (362 aa).

NAD(+) is bound by residues 71 to 76 (DGEQYK), 105 to 109 (GVVGD), 129 to 130 (TT), Lys142, Lys151, and 169 to 172 (CLKT). Zn(2+) contacts are provided by Glu184, His247, and His264.

The protein belongs to the sugar phosphate cyclases superfamily. Dehydroquinate synthase family. It depends on Co(2+) as a cofactor. Zn(2+) serves as cofactor. Requires NAD(+) as cofactor.

The protein localises to the cytoplasm. The catalysed reaction is 7-phospho-2-dehydro-3-deoxy-D-arabino-heptonate = 3-dehydroquinate + phosphate. It functions in the pathway metabolic intermediate biosynthesis; chorismate biosynthesis; chorismate from D-erythrose 4-phosphate and phosphoenolpyruvate: step 2/7. Its function is as follows. Catalyzes the conversion of 3-deoxy-D-arabino-heptulosonate 7-phosphate (DAHP) to dehydroquinate (DHQ). This is 3-dehydroquinate synthase from Escherichia coli (strain K12 / MC4100 / BW2952).